Here is a 106-residue protein sequence, read N- to C-terminus: Transcriptional and immune response regulator (106 aa).

In terms of assembly, monomer. Interacts with NOTCH2 (via ANK repeats), the interaction inhibits the nuclear translocation of NOTCH2 N2ICD. Interacts (C-terminus) with CBY1 (C-terminus), TCIM competes with CTNNB1 for the interaction with CBY1.

It localises to the cytoplasm. It is found in the nucleus. Its subcellular location is the nucleolus. The protein resides in the nucleus speckle. Its function is as follows. Seems to be involved in the regulation of cell growth an differentiation, may play different and opposite roles depending on the tissue or cell type. May enhance the WNT-CTNNB1 pathway by relieving antagonistic activity of CBY1. Enhances the proliferation of follicular dendritic cells. Plays a role in the mitogen-activated MAPK2/3 signaling pathway, positively regulates G1-to-S-phase transition of the cell cycle. In endothelial cells, enhances key inflammatory mediators and inflammatory response through the modulation of NF-kappaB transcriptional regulatory activity. Involved in the regulation of heat shock response, seems to play a positive feedback with HSF1 to modulate heat-shock downstream gene expression. Plays a role in the regulation of hematopoiesis even if the mechanisms are unknown. In cancers such as thyroid or lung cancer, it has been described as promoter of cell proliferation, G1-to-S-phase transition and inhibitor of apoptosis. However, it negatively regulates self-renewal of liver cancer cells via suppresion of NOTCH2 signaling. This Bos taurus (Bovine) protein is Transcriptional and immune response regulator (TCIM).